The chain runs to 153 residues: Myosin regulatory light chain, smooth muscle (153 aa).

EF-hand domains lie at 12–47, 81–116, and 117–152; these read SQIQ…LGRG, DPEE…QADR, and FSQS…GQEE. 4 residues coordinate Ca(2+): D25, N27, D29, and D36.

In molluscan muscle, calcium regulation is associated with myosin rather than with actin. Muscle myosin contains two types of light chains: the catalytic light chain, essential for ATPase activity, and the regulatory light chain, a calcium-binding protein responsible for Ca(2+) dependent binding and Ca(2+) dependent Mg-ATPase activity. In Halocynthia roretzi (Sea squirt), this protein is Myosin regulatory light chain, smooth muscle.